A 486-amino-acid chain; its full sequence is Betaine aldehyde dehydrogenase (486 aa).

Residues Thr-23 and Asp-90 each contribute to the K(+) site. 147-149 provides a ligand contact to NAD(+); that stretch reads GAW. Lys-159 serves as the catalytic Charge relay system. NAD(+) contacts are provided by residues 173 to 176 and 226 to 229; these read KPSE and ESGT. Leu-241 serves as a coordination point for K(+). The Proton acceptor role is filled by Glu-247. The NAD(+) site is built by Gly-249, Cys-281, and Glu-382. Cys-281 serves as the catalytic Nucleophile. Cysteine sulfenic acid (-SOH) is present on Cys-281. 2 residues coordinate K(+): Lys-452 and Gly-455. Residue Glu-459 is the Charge relay system of the active site.

The protein belongs to the aldehyde dehydrogenase family. In terms of assembly, dimer of dimers. K(+) is required as a cofactor.

The enzyme catalyses betaine aldehyde + NAD(+) + H2O = glycine betaine + NADH + 2 H(+). The protein operates within amine and polyamine biosynthesis; betaine biosynthesis via choline pathway; betaine from betaine aldehyde: step 1/1. In terms of biological role, involved in the biosynthesis of the osmoprotectant glycine betaine. Catalyzes the irreversible oxidation of betaine aldehyde to the corresponding acid. The polypeptide is Betaine aldehyde dehydrogenase (Vibrio vulnificus (strain YJ016)).